The chain runs to 349 residues: DNA polymerase IV (349 aa).

One can recognise a UmuC domain in the interval 7–188 (IIHIDMDYFF…LPVKKLFGVG (182 aa)). Residues Asp11 and Asp106 each coordinate Mg(2+). The active site involves Glu107.

The protein belongs to the DNA polymerase type-Y family. As to quaternary structure, monomer. The cofactor is Mg(2+).

It is found in the cytoplasm. It carries out the reaction DNA(n) + a 2'-deoxyribonucleoside 5'-triphosphate = DNA(n+1) + diphosphate. Its function is as follows. Poorly processive, error-prone DNA polymerase involved in untargeted mutagenesis. Copies undamaged DNA at stalled replication forks, which arise in vivo from mismatched or misaligned primer ends. These misaligned primers can be extended by PolIV. Exhibits no 3'-5' exonuclease (proofreading) activity. May be involved in translesional synthesis, in conjunction with the beta clamp from PolIII. The protein is DNA polymerase IV of Francisella tularensis subsp. holarctica (strain FTNF002-00 / FTA).